The chain runs to 1503 residues: E3 ubiquitin-protein ligase listerin (1503 aa).

HEAT repeat units lie at residues 52-89 (SGIDDETRIVMRKLTKKDCQTREKGLRELTNIIAETSS), 93-129 (CYEHFCGLVPQLSTDGSPTVRLLTMKTITLFLVKLEK), 133-170 (KGLKKIIPMVLFARCDVTNGVAAAAGAVIRDGFEADKK), 280-318 (LNTPSIVTYIQNHLDSQTFTPECSTAWEGMIILLPSAQF), 323-345 (SLQNGIYPRFLNVIRKKGNHWRV), 346-384 (LQHFLLPAVVLLLKEMGSLENNMKVLGTIMESFTDNLPW), 552-589 (GDIVRLIKLLLENQEIKSLNISVKNDHVGRRLLLTGGS), 640-663 (AENVEFLITLLRKMKSTDVSNEAE), 664-700 (KNVLILKLFTAIFESDEDAKSEHYNCLSEHLTSDFNS), 845-882 (LEKRYSLVALTEELQRSRREIEERLIRSDEVRFKLDDS), 1022-1065 (TLFI…RMFR), 1078-1117 (RTLLKAMFTLVEFPTNVPNDSVVTREFVPELSVFKYSLLE), 1141-1183 (AAAK…VMIS), and 1302-1340 (FKSITLLPAAVRLFHKNIPNNFKPIFQEVVTKHASKLLI). The segment at 1446 to 1499 (CTICMMTVHQQTNQLPKVKCKQCKNRFHSNCLVSSFHTYKWFESSNQSTCPLCR) adopts an RING-type zinc-finger fold.

It belongs to the LTN1 family. In terms of assembly, component of the ribosome quality control complex (RQC), composed of at least the E3 ubiquitin ligase ltn1 and nemf. The complex probably also contains tcf25 as well as vcp/p97 and its ubiquitin-binding cofactors. RQC forms a stable complex with 60S ribosomal subunits.

It localises to the cytoplasm. The protein localises to the cytosol. It catalyses the reaction S-ubiquitinyl-[E2 ubiquitin-conjugating enzyme]-L-cysteine + [acceptor protein]-L-lysine = [E2 ubiquitin-conjugating enzyme]-L-cysteine + N(6)-ubiquitinyl-[acceptor protein]-L-lysine.. Its pathway is protein modification; protein ubiquitination. In terms of biological role, E3 ubiquitin-protein ligase. Component of the ribosome quality control complex (RQC), a ribosome-associated complex that mediates ubiquitination and extraction of incompletely synthesized nascent chains for proteasomal degradation. Ubiquitination leads to vcp/p97 recruitment for extraction and degradation of the incomplete translation product. This chain is E3 ubiquitin-protein ligase listerin, found in Caenorhabditis briggsae.